We begin with the raw amino-acid sequence, 270 residues long: MKKEIIVYTISDSLGETSQKLLAAASAQYPDISFLNRYNFSFVTTEEELLEILKDALKDKALVVSTLVSKQLITAAKEFSERTGLLYLDLMAPFFELIQAKAGVDPIEEPGRRHQLDRAYFDKISAIEFAVKYDDGKNPQGFLDSDILLLGVSRTSKTPVSMYLANQGYRVSNLPLIPEVPLPPILEEMDPQKMIGLVCSPETLGQIRSSRLASLGLGNETSYTNVERIEQELAYAEEIFAKYGIPVIDVTAKSVEETAFLIKEKLDERN.

151–158 (GVSRTSKT) contacts ADP.

This sequence belongs to the pyruvate, phosphate/water dikinase regulatory protein family. PDRP subfamily.

The catalysed reaction is N(tele)-phospho-L-histidyl/L-threonyl-[pyruvate, phosphate dikinase] + ADP = N(tele)-phospho-L-histidyl/O-phospho-L-threonyl-[pyruvate, phosphate dikinase] + AMP + H(+). The enzyme catalyses N(tele)-phospho-L-histidyl/O-phospho-L-threonyl-[pyruvate, phosphate dikinase] + phosphate + H(+) = N(tele)-phospho-L-histidyl/L-threonyl-[pyruvate, phosphate dikinase] + diphosphate. Functionally, bifunctional serine/threonine kinase and phosphorylase involved in the regulation of the pyruvate, phosphate dikinase (PPDK) by catalyzing its phosphorylation/dephosphorylation. In Enterococcus faecalis (strain ATCC 700802 / V583), this protein is Putative pyruvate, phosphate dikinase regulatory protein 1.